The following is a 410-amino-acid chain: Trifunctional NAD biosynthesis/regulator protein NadR (410 aa).

The region spanning 7-62 (LKTAIKQQGCTLQQVADASGMTKGYLSQLLNAKIKSPSAQKLEALHRFLGLEFPRR) is the HTH cro/C1-type domain. Residues 18–37 (LQQVADASGMTKGYLSQLLN) constitute a DNA-binding region (H-T-H motif). A nicotinamide mononucleotide adenylyltransferase region spans residues 63-229 (QKNIGVVFGK…EYIPTEVKPF (167 aa)). NAD(+)-binding positions include 70–73 (FGKF), H77, R104, 144–157 (EEGM…WDVW), 177–179 (TSE), 204–206 (MNI), 259–261 (SAW), and 294–297 (YIDF). The interval 230-410 (FVRTVAILGG…LVKEMMGEQG (181 aa)) is ribosylnicotinamide kinase.

It in the central section; belongs to the bacterial NMN adenylyltransferase family. In the C-terminal section; belongs to the bacterial RNK family. Homotetramer.

Its subcellular location is the cell membrane. It localises to the cytoplasm. It carries out the reaction beta-nicotinamide D-ribonucleotide + ATP + H(+) = diphosphate + NAD(+). It catalyses the reaction beta-nicotinamide D-riboside + ATP = beta-nicotinamide D-ribonucleotide + ADP + H(+). Its pathway is cofactor biosynthesis; NAD(+) biosynthesis [regulation]. It functions in the pathway cofactor biosynthesis; NAD(+) biosynthesis; NAD(+) from nicotinamide D-ribonucleotide: step 1/1. Its activity is regulated as follows. Feed-back regulated by NAD. A high level of NAD causes NadR to lose enzymatic activity and repress several NAD synthetic genes; conversely, a low NAD level activates the assimilatory enzymatic activities and leads to derepression of biosynthetic genes. Functionally, this enzyme has three activities: DNA binding, nicotinamide mononucleotide (NMN) adenylyltransferase and ribosylnicotinamide (RN) kinase. The DNA-binding domain binds to the nadB operator sequence in an NAD- and ATP-dependent manner. As NAD levels increase within the cell, the affinity of NadR for the nadB operator regions of nadA, nadB, and pncB increases, repressing the transcription of these genes. The RN kinase activity catalyzes the phosphorylation of RN to form nicotinamide ribonucleotide. The NMN adenylyltransferase activity catalyzes the transfer of the AMP moiety of ATP to nicotinamide ribonucleotide to form NAD(+). The NMN adenylyltransferase domain also functions as the NAD and ATP sensor. This is Trifunctional NAD biosynthesis/regulator protein NadR (nadR) from Salmonella typhimurium (strain LT2 / SGSC1412 / ATCC 700720).